Here is a 589-residue protein sequence, read N- to C-terminus: Aspartate--tRNA ligase (589 aa).

Residue Glu-174 coordinates L-aspartate. Residues 198–201 are aspartate; the sequence is QLFK. Arg-220 provides a ligand contact to L-aspartate. ATP is bound by residues 220-222 and Gln-229; that span reads RDE. L-aspartate is bound at residue His-448. Glu-484 contacts ATP. Position 491 (Arg-491) interacts with L-aspartate. Position 536–539 (536–539) interacts with ATP; that stretch reads GLDR.

The protein belongs to the class-II aminoacyl-tRNA synthetase family. Type 1 subfamily. As to quaternary structure, homodimer.

It localises to the cytoplasm. It catalyses the reaction tRNA(Asp) + L-aspartate + ATP = L-aspartyl-tRNA(Asp) + AMP + diphosphate. In terms of biological role, catalyzes the attachment of L-aspartate to tRNA(Asp) in a two-step reaction: L-aspartate is first activated by ATP to form Asp-AMP and then transferred to the acceptor end of tRNA(Asp). In Leuconostoc citreum (strain KM20), this protein is Aspartate--tRNA ligase.